A 311-amino-acid polypeptide reads, in one-letter code: HPr kinase/phosphorylase (311 aa).

Residues His138 and Lys159 contribute to the active site. 153 to 160 (GKSGVGKS) serves as a coordination point for ATP. Mg(2+) is bound at residue Ser160. The Proton acceptor; for phosphorylation activity. Proton donor; for dephosphorylation activity role is filled by Asp177. The important for the catalytic mechanism of both phosphorylation and dephosphorylation stretch occupies residues 201–210 (LEIRGLGIIN). Glu202 contacts Mg(2+). Arg243 is an active-site residue. An important for the catalytic mechanism of dephosphorylation region spans residues 264-269 (PVRPGR).

Belongs to the HPrK/P family. Homohexamer. It depends on Mg(2+) as a cofactor.

The enzyme catalyses [HPr protein]-L-serine + ATP = [HPr protein]-O-phospho-L-serine + ADP + H(+). It carries out the reaction [HPr protein]-O-phospho-L-serine + phosphate + H(+) = [HPr protein]-L-serine + diphosphate. Its function is as follows. Catalyzes the ATP- as well as the pyrophosphate-dependent phosphorylation of a specific serine residue in HPr, a phosphocarrier protein of the phosphoenolpyruvate-dependent sugar phosphotransferase system (PTS). HprK/P also catalyzes the pyrophosphate-producing, inorganic phosphate-dependent dephosphorylation (phosphorolysis) of seryl-phosphorylated HPr (P-Ser-HPr). The two antagonistic activities of HprK/P are regulated by several intracellular metabolites, which change their concentration in response to the absence or presence of rapidly metabolisable carbon sources (glucose, fructose, etc.) in the growth medium. Also phosphorylates/dephosphorylates the HPr-like catabolite repression protein crh on a specific serine residue. Therefore, by controlling the phosphorylation state of HPr and crh, HPrK/P is a sensor enzyme that plays a major role in the regulation of carbon metabolism and sugar transport: it mediates carbon catabolite repression (CCR), and regulates PTS-catalyzed carbohydrate uptake and inducer exclusion. The chain is HPr kinase/phosphorylase from Geobacillus sp. (strain WCH70).